The primary structure comprises 313 residues: Beta-ketoacyl-[acyl-carrier-protein] synthase III (313 aa).

Catalysis depends on residues cysteine 112 and histidine 238. The tract at residues 239-243 is ACP-binding; sequence QANIR. Residue asparagine 268 is part of the active site.

This sequence belongs to the thiolase-like superfamily. FabH family. In terms of assembly, homodimer.

It is found in the cytoplasm. It carries out the reaction malonyl-[ACP] + acetyl-CoA + H(+) = 3-oxobutanoyl-[ACP] + CO2 + CoA. It participates in lipid metabolism; fatty acid biosynthesis. Its function is as follows. Catalyzes the condensation reaction of fatty acid synthesis by the addition to an acyl acceptor of two carbons from malonyl-ACP. Catalyzes the first condensation reaction which initiates fatty acid synthesis and may therefore play a role in governing the total rate of fatty acid production. Possesses both acetoacetyl-ACP synthase and acetyl transacylase activities. Its substrate specificity determines the biosynthesis of branched-chain and/or straight-chain of fatty acids. This chain is Beta-ketoacyl-[acyl-carrier-protein] synthase III, found in Staphylococcus aureus (strain bovine RF122 / ET3-1).